A 513-amino-acid chain; its full sequence is Putative ribose/galactose/methyl galactoside import ATP-binding protein 2 (513 aa).

2 ABC transporter domains span residues 24 to 260 (LTAE…VGRE) and 270 to 510 (VPIG…VMEL). 56–63 (GENGAGKS) is a binding site for ATP.

Belongs to the ABC transporter superfamily. Carbohydrate importer 2 (CUT2) (TC 3.A.1.2) family.

Its subcellular location is the cell inner membrane. The enzyme catalyses D-ribose(out) + ATP + H2O = D-ribose(in) + ADP + phosphate + H(+). It carries out the reaction D-galactose(out) + ATP + H2O = D-galactose(in) + ADP + phosphate + H(+). In terms of biological role, part of an ABC transporter complex involved in carbohydrate import. Could be involved in ribose, galactose and/or methyl galactoside import. Responsible for energy coupling to the transport system. The polypeptide is Putative ribose/galactose/methyl galactoside import ATP-binding protein 2 (Rhizobium meliloti (strain 1021) (Ensifer meliloti)).